We begin with the raw amino-acid sequence, 428 residues long: Glutamate-1-semialdehyde 2,1-aminomutase 1 (428 aa).

N6-(pyridoxal phosphate)lysine is present on Lys-267.

Belongs to the class-III pyridoxal-phosphate-dependent aminotransferase family. HemL subfamily. In terms of assembly, homodimer. The cofactor is pyridoxal 5'-phosphate.

It localises to the cytoplasm. The catalysed reaction is (S)-4-amino-5-oxopentanoate = 5-aminolevulinate. Its pathway is porphyrin-containing compound metabolism; protoporphyrin-IX biosynthesis; 5-aminolevulinate from L-glutamyl-tRNA(Glu): step 2/2. In Staphylococcus aureus (strain bovine RF122 / ET3-1), this protein is Glutamate-1-semialdehyde 2,1-aminomutase 1.